Consider the following 1082-residue polypeptide: Error-prone DNA polymerase (1082 aa).

The protein belongs to the DNA polymerase type-C family. DnaE2 subfamily.

It is found in the cytoplasm. It carries out the reaction DNA(n) + a 2'-deoxyribonucleoside 5'-triphosphate = DNA(n+1) + diphosphate. Functionally, DNA polymerase involved in damage-induced mutagenesis and translesion synthesis (TLS). It is not the major replicative DNA polymerase. This chain is Error-prone DNA polymerase, found in Xanthomonas campestris pv. campestris (strain B100).